The following is a 265-amino-acid chain: UPF0354 protein ABC2771 (265 aa).

Belongs to the UPF0354 family.

This Shouchella clausii (strain KSM-K16) (Alkalihalobacillus clausii) protein is UPF0354 protein ABC2771.